The primary structure comprises 174 residues: Mytilin-3 (174 aa).

The signal sequence occupies residues Met-1–Ala-16.

As to expression, component of the organic matrix of calcified shell layers like nacre and prisms.

The protein resides in the secreted. The sequence is that of Mytilin-3 from Mytilus californianus (California mussel).